Consider the following 507-residue polypeptide: Histidine ammonia-lyase (507 aa).

Residues 143-145 (SSG) constitute a cross-link (5-imidazolinone (Ser-Gly)). The residue at position 144 (Ser-144) is a 2,3-didehydroalanine (Ser).

Belongs to the PAL/histidase family. In terms of processing, contains an active site 4-methylidene-imidazol-5-one (MIO), which is formed autocatalytically by cyclization and dehydration of residues Ser-Ser-Gly.

It is found in the cytoplasm. It catalyses the reaction L-histidine = trans-urocanate + NH4(+). It functions in the pathway amino-acid degradation; L-histidine degradation into L-glutamate; N-formimidoyl-L-glutamate from L-histidine: step 1/3. In Alkaliphilus metalliredigens (strain QYMF), this protein is Histidine ammonia-lyase.